The primary structure comprises 363 residues: Mitochondrial RNA-splicing protein MRS1 (363 aa).

Homodimer. Forms a ribonucleoprotein complex composed of maturase bI3 and 2 dimers of MRS1 that assemble around the bI3 RNA.

It is found in the mitochondrion matrix. In terms of biological role, function in mitochondrial RNA splicing in the excision of mitochondrial group I introns aI5 beta from COX1 and bI3 from COB transcripts and thus would be involved in obtaining the correct structure of the intron, to allow the RNA catalyzed reactions to occur. The chain is Mitochondrial RNA-splicing protein MRS1 (MRS1) from Saccharomyces cerevisiae (strain ATCC 204508 / S288c) (Baker's yeast).